The chain runs to 957 residues: Dystrophin-related protein 2 (957 aa).

Spectrin repeat units follow at residues 102-179 (DHSG…EELE) and 231-337 (EQLL…QLQD). One can recognise a WW domain in the interval 358–383 (WERAISPNKVPYYINHQAQTTCWDHP). The segment at 605 to 661 (KHQTKCSICRQCPIKGFRYRSLKQFNVDICQTCFLTGRASKGNKLHYPIMEYYTPTT) adopts a ZZ-type; degenerate zinc-finger fold. Zn(2+)-binding residues include cysteine 610, cysteine 613, cysteine 634, and cysteine 637. Serine 748 is modified (phosphoserine). Low complexity predominate over residues 877 to 900 (PPTESDGSGSAGSSLASSPQQSEG). Residues 877 to 923 (PPTESDGSGSAGSSLASSPQQSEGSHPREKGQTTPDTEAADDVGSKS) form a disordered region. The residue at position 910 (threonine 910) is a Phosphothreonine.

As to quaternary structure, interacts with PRX; this enhances phosphorylation. Identified in a dystroglycan complex that contains at least PRX, DRP2, UTRN, DMD and DAG1. Detected in fetal brain.

It localises to the postsynaptic density. The protein resides in the cell projection. Its subcellular location is the dendrite. It is found in the perikaryon. The protein localises to the cell membrane. In terms of biological role, required for normal myelination and for normal organization of the cytoplasm and the formation of Cajal bands in myelinating Schwann cells. Required for normal PRX location at appositions between the abaxonal surface of the myelin sheath and the Schwann cell plasma membrane. Possibly involved in membrane-cytoskeleton interactions of the central nervous system. The chain is Dystrophin-related protein 2 (DRP2) from Homo sapiens (Human).